The sequence spans 750 residues: MIIRSPEPEVKILVDRDPIKTSFEEWAKPGHFSRTIAKGPDTTTWIWNLHADAHDFDSHTSDLEEISRKVFSAHFGQLSIIFLWLSGMYFHGARFSNYEAWLSDPTHIGPSAQVVWPIVGQEILNGDVGGGFQGIQITSGFFQIWRASGITSELQLYCTGIGALVCAALMLFAGWFHYHKAAPKLAWFQDVESMLNHHLAGLLGLGSLSWAGHQVHVSLPINQFLNAGVDPKEIPLPHEYILNRDLLAQLYPSFAEGATPFFTLNWSKYSEFLTFRGGLDPVTGGLWLTDIAHHHLAIAILFLIAGHMYRTNWGIGHGIKDILEAHKGPFTGQGHKGLYEILTTSWHAQLSLNLAMLGSLTIIVAHHMYSMPPYPYLATDYATQLSLFTHHMWIGGFLIVGAAAHAAIFMVRDYDPTNRYNDLLDRVLRHRDAIISHLNWVCIFLGFHSFGLYIHNDTMSALGRPQDMFSDTAIQLQPVFAQWIQNTHALAPGVTAPGETASTSLTWGGGELVAVGGKVALLPIPLGTADFLVHHIHAFTIHVPVLILLKGVLFARSSRLIPDKANLGFRFPCDGPGRGGTCQVSAWDHVFLGLFWMYNAISVVIFHFSWKMQSDVWGSISDQGVVTHITGGNFAQSSITINGWLRDFLWAQASQVIQSYGSSLSAYGLFFLGAHFVWAFSLMFLFSGRGYWQELIESIVWAHNKLKVAPATQPRALSIVQGRAVGVTHYLLGGIATTWAFFLARIIAVG.

8 consecutive transmembrane segments (helical) span residues 70–93 (VFSA…FHGA), 156–179 (LYCT…FHYH), 195–219 (LNHH…HVSL), 291–309 (IAHH…GHMY), 346–369 (WHAQ…HHMY), 385–411 (LSLF…IFMV), 433–455 (AIIS…LYIH), and 531–549 (FLVH…LILL). C573 and C582 together coordinate [4Fe-4S] cluster. Helical transmembrane passes span 589-610 (HVFL…HFSW) and 664-686 (LSAY…MFLF). Position 675 (H675) interacts with chlorophyll a'. Positions 683 and 691 each coordinate chlorophyll a. Residue W692 coordinates phylloquinone. The helical transmembrane segment at 724 to 744 (AVGVTHYLLGGIATTWAFFLA) threads the bilayer.

Belongs to the PsaA/PsaB family. In terms of assembly, the PsaA/B heterodimer binds the P700 chlorophyll special pair and subsequent electron acceptors. PSI consists of a core antenna complex that captures photons, and an electron transfer chain that converts photonic excitation into a charge separation. The eukaryotic PSI reaction center is composed of at least 11 subunits. It depends on P700 is a chlorophyll a/chlorophyll a' dimer, A0 is one or more chlorophyll a, A1 is one or both phylloquinones and FX is a shared 4Fe-4S iron-sulfur center. as a cofactor.

It localises to the plastid. Its subcellular location is the chloroplast thylakoid membrane. It catalyses the reaction reduced [plastocyanin] + hnu + oxidized [2Fe-2S]-[ferredoxin] = oxidized [plastocyanin] + reduced [2Fe-2S]-[ferredoxin]. PsaA and PsaB bind P700, the primary electron donor of photosystem I (PSI), as well as the electron acceptors A0, A1 and FX. PSI is a plastocyanin-ferredoxin oxidoreductase, converting photonic excitation into a charge separation, which transfers an electron from the donor P700 chlorophyll pair to the spectroscopically characterized acceptors A0, A1, FX, FA and FB in turn. Oxidized P700 is reduced on the lumenal side of the thylakoid membrane by plastocyanin. This is Photosystem I P700 chlorophyll a apoprotein A1 from Crucihimalaya wallichii (Rock-cress).